The primary structure comprises 373 residues: tRNA (guanine(26)-N(2))-dimethyltransferase (373 aa).

The Trm1 methyltransferase domain maps to 2-365 (KIISEGETKL…AELSDLVVLI (364 aa)). S-adenosyl-L-methionine is bound by residues arginine 35, arginine 66, aspartate 86, aspartate 113, and alanine 114.

Belongs to the class I-like SAM-binding methyltransferase superfamily. Trm1 family.

The enzyme catalyses guanosine(26) in tRNA + 2 S-adenosyl-L-methionine = N(2)-dimethylguanosine(26) in tRNA + 2 S-adenosyl-L-homocysteine + 2 H(+). In terms of biological role, dimethylates a single guanine residue at position 26 of a number of tRNAs using S-adenosyl-L-methionine as donor of the methyl groups. This chain is tRNA (guanine(26)-N(2))-dimethyltransferase, found in Methanococcus maripaludis (Methanococcus deltae).